The primary structure comprises 133 residues: Large ribosomal subunit protein uL22 (133 aa).

Belongs to the universal ribosomal protein uL22 family. Part of the 50S ribosomal subunit.

This protein binds specifically to 23S rRNA; its binding is stimulated by other ribosomal proteins, e.g. L4, L17, and L20. It is important during the early stages of 50S assembly. It makes multiple contacts with different domains of the 23S rRNA in the assembled 50S subunit and ribosome. In terms of biological role, the globular domain of the protein is located near the polypeptide exit tunnel on the outside of the subunit, while an extended beta-hairpin is found that lines the wall of the exit tunnel in the center of the 70S ribosome. This is Large ribosomal subunit protein uL22 from Aquifex aeolicus (strain VF5).